The following is a 224-amino-acid chain: Octanoyltransferase (224 aa).

The 181-residue stretch at 33-213 folds into the BPL/LPL catalytic domain; the sequence is GTTAETMLLL…ALQAEFGREA (181 aa). Positions 51–71 are disordered; sequence GKRTTDDERPTDGTPVVDVDR. Substrate-binding positions include 71–78, 143–145, and 156–158; these read RGGKITWH, AIG, and GFA. The Acyl-thioester intermediate role is filled by Cys-174.

Belongs to the LipB family.

The protein resides in the cytoplasm. The enzyme catalyses octanoyl-[ACP] + L-lysyl-[protein] = N(6)-octanoyl-L-lysyl-[protein] + holo-[ACP] + H(+). The protein operates within protein modification; protein lipoylation via endogenous pathway; protein N(6)-(lipoyl)lysine from octanoyl-[acyl-carrier-protein]: step 1/2. In terms of biological role, catalyzes the transfer of endogenously produced octanoic acid from octanoyl-acyl-carrier-protein onto the lipoyl domains of lipoate-dependent enzymes. Lipoyl-ACP can also act as a substrate although octanoyl-ACP is likely to be the physiological substrate. The chain is Octanoyltransferase from Leifsonia xyli subsp. xyli (strain CTCB07).